A 72-amino-acid polypeptide reads, in one-letter code: Large ribosomal subunit protein bL28 (72 aa).

It belongs to the bacterial ribosomal protein bL28 family.

This is Large ribosomal subunit protein bL28 from Chlorobium phaeobacteroides (strain DSM 266 / SMG 266 / 2430).